The primary structure comprises 184 residues: CDP-archaeol synthase (184 aa).

5 helical membrane passes run 4 to 24 (IIMVLYSIFLFLPAFIANPGA), 54 to 74 (FIGGSLIGVLAGIIVYYIIYI), 86 to 106 (IISALPVLFAMSFGSLTGDIT), 122 to 142 (GSLLDQWPFVLMSFLFIFIFA), and 145 to 165 (FFLEFYGNFIAIILILVLTPP).

The protein belongs to the CDP-archaeol synthase family. Mg(2+) is required as a cofactor.

It is found in the cell membrane. It carries out the reaction 2,3-bis-O-(geranylgeranyl)-sn-glycerol 1-phosphate + CTP + H(+) = CDP-2,3-bis-O-(geranylgeranyl)-sn-glycerol + diphosphate. The protein operates within membrane lipid metabolism; glycerophospholipid metabolism. Catalyzes the formation of CDP-2,3-bis-(O-geranylgeranyl)-sn-glycerol (CDP-archaeol) from 2,3-bis-(O-geranylgeranyl)-sn-glycerol 1-phosphate (DGGGP) and CTP. This reaction is the third ether-bond-formation step in the biosynthesis of archaeal membrane lipids. The chain is CDP-archaeol synthase from Picrophilus torridus (strain ATCC 700027 / DSM 9790 / JCM 10055 / NBRC 100828 / KAW 2/3).